Reading from the N-terminus, the 57-residue chain is Large ribosomal subunit protein bL32 (57 aa).

It belongs to the bacterial ribosomal protein bL32 family.

The sequence is that of Large ribosomal subunit protein bL32 from Streptomyces griseus subsp. griseus (strain JCM 4626 / CBS 651.72 / NBRC 13350 / KCC S-0626 / ISP 5235).